Reading from the N-terminus, the 113-residue chain is U11-theraphotoxin-Hhn1a (113 aa).

Residues 1–21 (MNTVRVAFLLVFVLAVSLGQA) form the signal peptide. The propeptide occupies 22-74 (DKDENRMEMQEKTEQGKSYLDFAENLLLQKLEEPEAKLLEEDSEESRNSRQKR). A compositionally biased stretch (basic and acidic residues) spans 58–69 (KLLEEDSEESRN). The segment at 58-83 (KLLEEDSEESRNSRQKRCIGEGVPCD) is disordered. Disulfide bonds link cysteine 75-cysteine 90, cysteine 82-cysteine 95, and cysteine 89-cysteine 110.

This sequence belongs to the neurotoxin 14 (magi-1) family. 01 (HNTX-16) subfamily. In terms of tissue distribution, expressed by the venom gland.

The protein resides in the secreted. Functionally, probable ion channel inhibitor. The chain is U11-theraphotoxin-Hhn1a from Cyriopagopus hainanus (Chinese bird spider).